Reading from the N-terminus, the 2410-residue chain is Dual specificity protein kinase splA (2410 aa).

Disordered regions lie at residues 29–48 (NNNN…NNNN), 66–103 (NHPS…GELT), 116–158 (NTQT…SNGG), 187–252 (NISP…SSGI), 508–647 (QQLQ…VPSA), and 659–820 (SSSS…KKEG). Composition is skewed to low complexity over residues 116-128 (NTQT…TSPN) and 137-158 (NTTT…SNGG). Positions 514–525 (QPPPTIQPPPQQ) are enriched in pro residues. A compositionally biased stretch (low complexity) spans 530 to 544 (LRGNRSSGNLSGLNS). Residues 545–554 (FSLKQSTDSL) show a composition bias toward polar residues. The segment covering 560 to 583 (SQQSTVSSNSTPIAATPISPLTAP) has biased composition (low complexity). The span at 584 to 594 (TSPPPPPPPPT) shows a compositional bias: pro residues. 6 stretches are compositionally biased toward low complexity: residues 595–618 (NFNS…NTTV), 627–639 (VLPK…SPRP), 659–686 (SSSS…LNIS), 701–738 (SPSY…SPSV), 746–759 (ISPN…PNIS), and 777–813 (NTNN…NNTN). 2 consecutive B30.2/SPRY domains span residues 822–1004 (SSWF…GPFS) and 1020–1209 (DSGG…PPFK). 2 disordered regions span residues 1228–1428 (PNGN…NNIY) and 1493–1512 (SLGV…PRKI). Composition is skewed to low complexity over residues 1229–1359 (NGNN…NNNI), 1373–1399 (SSTG…NNSS), 1419–1428 (SSTNNNNNIY), and 1493–1507 (SLGV…SPKT). The B30.2/SPRY 3 domain maps to 1481–1703 (PITASTNHTL…CVATFPGGHF (223 aa)). Positions 1734–1798 (WAPNDVAIWL…INRLNRMIQI (65 aa)) constitute an SAM domain. A disordered region spans residues 1862-2105 (KSYTQKEIED…PPPPPQLPVR (244 aa)). Positions 1865 to 1874 (TQKEIEDRNR) are enriched in basic and acidic residues. Over residues 1951–1967 (SVSSTGGSSGFLTFPSS) the composition is skewed to low complexity. Residues 1989–2002 (ITSNYKGITNTGQP) show a composition bias toward polar residues. Residues 2020 to 2070 (SNNGNNGNNNNNNNNNNIKANQQQQQQSSYQQSQTQQQQQHITSTSTSTTN) are compositionally biased toward low complexity. Positions 2089–2102 (PSRPPPPPPPPPQL) are enriched in pro residues. Residues 2115–2387 (LEFGQTIGKG…FKQIIVHLKE (273 aa)) form the Protein kinase domain. Residues 2121–2129 (IGKGFFGEV) and Lys2142 contribute to the ATP site. Catalysis depends on Asp2243, which acts as the Proton acceptor.

It belongs to the protein kinase superfamily. TKL Tyr protein kinase family. In terms of processing, tyrosine kinase domain is capable of autophosphorylation, in vitro; however it is also autophosphorylated on serine and threonine residues.

The enzyme catalyses L-tyrosyl-[protein] + ATP = O-phospho-L-tyrosyl-[protein] + ADP + H(+). Its function is as follows. Essential for spore differentiation. This Dictyostelium discoideum (Social amoeba) protein is Dual specificity protein kinase splA (splA).